The following is a 382-amino-acid chain: Acetylserotonin O-methyltransferase (382 aa).

Residues Gly218, Asp241, Asp261, Met262, and Lys275 each coordinate S-adenosyl-L-homocysteine. His279 functions as the Proton acceptor in the catalytic mechanism. Active-site residues include Glu308 and Glu347.

This sequence belongs to the class I-like SAM-binding methyltransferase superfamily. Cation-independent O-methyltransferase family.

It localises to the cytoplasm. The catalysed reaction is N-acetylserotonin + S-adenosyl-L-methionine = melatonin + S-adenosyl-L-homocysteine + H(+). It participates in aromatic compound metabolism; melatonin biosynthesis; melatonin from serotonin: step 1/2. In terms of biological role, methyltransferase which catalyzes the transfer of a methyl group onto N-acetylserotonin, producing melatonin (N-acetyl-5-methoxytryptamine). Does not seem to possess caffeate O-methyltransferase activity. Implicated in melatonin-dependent circadian dynamics of stomatal aperture to minimize night water loss and promote drought tolerance. Prevents seed germination by promoting melatonin biosynthesis. Promotes melatonin-triggered defense responses to the necrotrophic fungus Botrytis cinerea. Functionally, (Microbial infection) Promotes melatonin-triggered defense responses to the necrotrophic fungus Botrytis cinerea. The polypeptide is Acetylserotonin O-methyltransferase (Arabidopsis thaliana (Mouse-ear cress)).